We begin with the raw amino-acid sequence, 400 residues long: Enoyl-[acyl-carrier-protein] reductase [NADH] (400 aa).

NAD(+) contacts are provided by residues 48 to 53, 74 to 75, 111 to 112, and 139 to 140; these read GSSSGY, FE, DA, and LA. Y225 contributes to the substrate binding site. The Proton donor role is filled by Y235. NAD(+) contacts are provided by residues K244 and 273-275; that span reads VVT.

The protein belongs to the TER reductase family. As to quaternary structure, monomer.

It catalyses the reaction a 2,3-saturated acyl-[ACP] + NAD(+) = a (2E)-enoyl-[ACP] + NADH + H(+). It participates in lipid metabolism; fatty acid biosynthesis. Its function is as follows. Involved in the final reduction of the elongation cycle of fatty acid synthesis (FAS II). Catalyzes the reduction of a carbon-carbon double bond in an enoyl moiety that is covalently linked to an acyl carrier protein (ACP). The sequence is that of Enoyl-[acyl-carrier-protein] reductase [NADH] from Aliivibrio fischeri (strain ATCC 700601 / ES114) (Vibrio fischeri).